The primary structure comprises 125 residues: Methylglyoxal synthase (125 aa).

An MGS-like domain is found at 1–125 (MTQRLRIALI…TAEKLVRALD (125 aa)). Substrate is bound by residues His12, Lys16, 38 to 41 (TGTT), and 59 to 60 (SG). Residue Asp65 is the Proton donor/acceptor of the active site. His92 serves as a coordination point for substrate.

It belongs to the methylglyoxal synthase family.

It carries out the reaction dihydroxyacetone phosphate = methylglyoxal + phosphate. Catalyzes the formation of methylglyoxal from dihydroxyacetone phosphate. This Brucella abortus (strain S19) protein is Methylglyoxal synthase.